An 88-amino-acid polypeptide reads, in one-letter code: MKTLLLTLVVVTIVCLDFGYARTCLKTPEVKSEPCPPGQEVCYTKAWRDRMCSFRGKVIELGCAATCPRQEPGKEITCCSTDDCNTHP.

The N-terminal stretch at 1-21 (MKTLLLTLVVVTIVCLDFGYA) is a signal peptide. Cystine bridges form between Cys-24–Cys-42, Cys-35–Cys-63, Cys-67–Cys-78, and Cys-79–Cys-84.

It belongs to the three-finger toxin family. Long-chain subfamily. Type II alpha-neurotoxin sub-subfamily. Expressed by the venom gland.

The protein localises to the secreted. Binds with high affinity to muscular nicotinic acetylcholine receptors (nAChRs), whereas it binds with a low affinity to neuronal alpha-7/CHRNA7 nAChRs. This is Long neurotoxin LNTX-2 from Demansia vestigiata (Lesser black whip snake).